The following is a 348-amino-acid chain: Phosphoribosylformylglycinamidine cyclo-ligase (348 aa).

This sequence belongs to the AIR synthase family.

It localises to the cytoplasm. It catalyses the reaction 2-formamido-N(1)-(5-O-phospho-beta-D-ribosyl)acetamidine + ATP = 5-amino-1-(5-phospho-beta-D-ribosyl)imidazole + ADP + phosphate + H(+). It functions in the pathway purine metabolism; IMP biosynthesis via de novo pathway; 5-amino-1-(5-phospho-D-ribosyl)imidazole from N(2)-formyl-N(1)-(5-phospho-D-ribosyl)glycinamide: step 2/2. The polypeptide is Phosphoribosylformylglycinamidine cyclo-ligase (Citrifermentans bemidjiense (strain ATCC BAA-1014 / DSM 16622 / JCM 12645 / Bem) (Geobacter bemidjiensis)).